Reading from the N-terminus, the 542-residue chain is Glutamyl-tRNA(Gln) amidotransferase subunit B, mitochondrial (542 aa).

The transit peptide at 1–66 directs the protein to the mitochondrion; sequence MRVFRRFYQV…PNSHTSFFDI (66 aa).

The protein belongs to the GatB/GatE family. GatB subfamily. As to quaternary structure, subunit of the heterotrimeric GatFAB amidotransferase (AdT) complex, composed of A, B and F subunits.

Its subcellular location is the mitochondrion. The enzyme catalyses L-glutamyl-tRNA(Gln) + L-glutamine + ATP + H2O = L-glutaminyl-tRNA(Gln) + L-glutamate + ADP + phosphate + H(+). Allows the formation of correctly charged Gln-tRNA(Gln) through the transamidation of misacylated Glu-tRNA(Gln) in the mitochondria. The reaction takes place in the presence of glutamine and ATP through an activated gamma-phospho-Glu-tRNA(Gln). This Zygosaccharomyces rouxii (strain ATCC 2623 / CBS 732 / NBRC 1130 / NCYC 568 / NRRL Y-229) protein is Glutamyl-tRNA(Gln) amidotransferase subunit B, mitochondrial.